A 91-amino-acid polypeptide reads, in one-letter code: Small ribosomal subunit protein uS17 (91 aa).

This sequence belongs to the universal ribosomal protein uS17 family. As to quaternary structure, part of the 30S ribosomal subunit.

One of the primary rRNA binding proteins, it binds specifically to the 5'-end of 16S ribosomal RNA. The protein is Small ribosomal subunit protein uS17 of Acidithiobacillus ferrooxidans (strain ATCC 23270 / DSM 14882 / CIP 104768 / NCIMB 8455) (Ferrobacillus ferrooxidans (strain ATCC 23270)).